Reading from the N-terminus, the 391-residue chain is Processive diacylglycerol beta-glucosyltransferase (391 aa).

This sequence belongs to the glycosyltransferase 28 family. UgtP subfamily.

It localises to the cell membrane. The catalysed reaction is a 1,2-diacyl-3-O-(beta-D-glucopyranosyl)-sn-glycerol + UDP-alpha-D-glucose = a 1,2-diacyl-3-O-(beta-D-Glc-(1-&gt;6)-beta-D-Glc)-sn-glycerol + UDP + H(+). It catalyses the reaction a 1,2-diacyl-sn-glycerol + UDP-alpha-D-glucose = a 1,2-diacyl-3-O-(beta-D-glucopyranosyl)-sn-glycerol + UDP + H(+). The protein operates within glycolipid metabolism; diglucosyl-diacylglycerol biosynthesis. Processive glucosyltransferase involved in the biosynthesis of both the bilayer- and non-bilayer-forming membrane glucolipids. Is able to successively transfer two glucosyl residues to diacylglycerol (DAG), thereby catalyzing the formation of beta-monoglucosyl-DAG (3-O-(beta-D-glucopyranosyl)-1,2-diacyl-sn-glycerol) and beta-diglucosyl-DAG (3-O-(beta-D-glucopyranosyl-beta-(1-&gt;6)-D-glucopyranosyl)-1,2-diacyl-sn-glycerol). Beta-diglucosyl-DAG is the predominant glycolipid found in Bacillales and is also used as a membrane anchor for lipoteichoic acid (LTA). The protein is Processive diacylglycerol beta-glucosyltransferase of Staphylococcus aureus (strain MW2).